The chain runs to 148 residues: Large ribosomal subunit protein bL9 (148 aa).

Belongs to the bacterial ribosomal protein bL9 family.

Its function is as follows. Binds to the 23S rRNA. The protein is Large ribosomal subunit protein bL9 of Methylococcus capsulatus (strain ATCC 33009 / NCIMB 11132 / Bath).